The sequence spans 329 residues: Glycerol-3-phosphate dehydrogenase [NAD(P)+] (329 aa).

NADPH contacts are provided by Trp-11, Arg-30, and Lys-103. Lys-103, Gly-132, and Ser-134 together coordinate sn-glycerol 3-phosphate. Ala-136 contacts NADPH. The sn-glycerol 3-phosphate site is built by Lys-187, Asp-240, Ser-250, Arg-251, and Asn-252. Lys-187 (proton acceptor) is an active-site residue. Arg-251 serves as a coordination point for NADPH. 2 residues coordinate NADPH: Val-275 and Glu-277.

It belongs to the NAD-dependent glycerol-3-phosphate dehydrogenase family.

It localises to the cytoplasm. The enzyme catalyses sn-glycerol 3-phosphate + NAD(+) = dihydroxyacetone phosphate + NADH + H(+). It catalyses the reaction sn-glycerol 3-phosphate + NADP(+) = dihydroxyacetone phosphate + NADPH + H(+). It participates in membrane lipid metabolism; glycerophospholipid metabolism. Functionally, catalyzes the reduction of the glycolytic intermediate dihydroxyacetone phosphate (DHAP) to sn-glycerol 3-phosphate (G3P), the key precursor for phospholipid synthesis. In Methylobacillus flagellatus (strain ATCC 51484 / DSM 6875 / VKM B-1610 / KT), this protein is Glycerol-3-phosphate dehydrogenase [NAD(P)+].